The sequence spans 829 residues: Periplasmic nitrate reductase (829 aa).

The segment at residues 1–30 (MKMTRRAFVKANAAASAAAVAGITLPASAA) is a signal peptide (tat-type signal). In terms of domain architecture, 4Fe-4S Mo/W bis-MGD-type spans 41–97 (ITWDKAPCRFCGTGCSVLVGTQNGKVVATQGDPEAPVNKGLNCIKGYFLSKIMYGQD). [4Fe-4S] cluster contacts are provided by Cys-48, Cys-51, Cys-55, and Cys-83. Mo-bis(molybdopterin guanine dinucleotide) contacts are provided by residues Lys-85, Gln-152, Asn-177, Cys-181, 214 to 221 (WGSNMAEM), 245 to 249 (STYYH), 264 to 266 (QSD), Met-374, Gln-378, Asn-484, 510 to 511 (SD), Lys-533, Asp-560, and 718 to 727 (TGRVLEHWHT). A substrate-binding site is contributed by Phe-794. Mo-bis(molybdopterin guanine dinucleotide) contacts are provided by Asn-802 and Lys-819.

It belongs to the prokaryotic molybdopterin-containing oxidoreductase family. NasA/NapA/NarB subfamily. Component of the periplasmic nitrate reductase NapAB complex composed of NapA and NapB. The cofactor is [4Fe-4S] cluster. It depends on Mo-bis(molybdopterin guanine dinucleotide) as a cofactor. Post-translationally, predicted to be exported by the Tat system. The position of the signal peptide cleavage has not been experimentally proven.

The protein localises to the periplasm. It catalyses the reaction 2 Fe(II)-[cytochrome] + nitrate + 2 H(+) = 2 Fe(III)-[cytochrome] + nitrite + H2O. Its function is as follows. Catalytic subunit of the periplasmic nitrate reductase complex NapAB. Receives electrons from NapB and catalyzes the reduction of nitrate to nitrite. This chain is Periplasmic nitrate reductase, found in Vibrio vulnificus (strain CMCP6).